Here is a 114-residue protein sequence, read N- to C-terminus: uncharacterized protein (114 aa).

C40, C106, and C108 together coordinate Fe cation.

This sequence belongs to the HesB/IscA family. Ycf83 subfamily.

The protein resides in the plastid. It localises to the chloroplast. This is an uncharacterized protein from Pyropia yezoensis (Susabi-nori).